A 664-amino-acid polypeptide reads, in one-letter code: RNA-binding protein RMD9, mitochondrial (664 aa).

The transit peptide at 1–32 (MFRLVQQQTLKSRVPNQFVSASRNSLNSQFRF) directs the protein to the mitochondrion. Positions 38–68 (LERNPQQDPTTAAPAKSSSDKRNSKKKYENN) are disordered. Residues 55–68 (SSDKRNSKKKYENN) show a composition bias toward basic and acidic residues.

It belongs to the RMD9 family. In terms of assembly, monomer. Post-translationally, phosphorylated. Phosphorylation promotes binding to RNA.

It is found in the mitochondrion inner membrane. Binds the 3'-UTR of mitochondrial mRNAs. Involved in the processing or stability of mitochondrial mRNAs. The protein is RNA-binding protein RMD9, mitochondrial (RMD9) of Kluyveromyces lactis (strain ATCC 8585 / CBS 2359 / DSM 70799 / NBRC 1267 / NRRL Y-1140 / WM37) (Yeast).